The sequence spans 674 residues: 1,4-alpha-glucan branching enzyme GlgB 1 (674 aa).

D336 (nucleophile) is an active-site residue. The active-site Proton donor is E389.

Belongs to the glycosyl hydrolase 13 family. GlgB subfamily. Monomer.

It carries out the reaction Transfers a segment of a (1-&gt;4)-alpha-D-glucan chain to a primary hydroxy group in a similar glucan chain.. It functions in the pathway glycan biosynthesis; glycogen biosynthesis. Its function is as follows. Catalyzes the formation of the alpha-1,6-glucosidic linkages in glycogen by scission of a 1,4-alpha-linked oligosaccharide from growing alpha-1,4-glucan chains and the subsequent attachment of the oligosaccharide to the alpha-1,6 position. This is 1,4-alpha-glucan branching enzyme GlgB 1 (glgB1) from Clostridium perfringens (strain 13 / Type A).